A 176-amino-acid polypeptide reads, in one-letter code: ATP synthase subunit delta (176 aa).

Belongs to the ATPase delta chain family. In terms of assembly, F-type ATPases have 2 components, F(1) - the catalytic core - and F(0) - the membrane proton channel. F(1) has five subunits: alpha(3), beta(3), gamma(1), delta(1), epsilon(1). F(0) has three main subunits: a(1), b(2) and c(10-14). The alpha and beta chains form an alternating ring which encloses part of the gamma chain. F(1) is attached to F(0) by a central stalk formed by the gamma and epsilon chains, while a peripheral stalk is formed by the delta and b chains.

Its subcellular location is the cell membrane. Its function is as follows. F(1)F(0) ATP synthase produces ATP from ADP in the presence of a proton or sodium gradient. F-type ATPases consist of two structural domains, F(1) containing the extramembraneous catalytic core and F(0) containing the membrane proton channel, linked together by a central stalk and a peripheral stalk. During catalysis, ATP synthesis in the catalytic domain of F(1) is coupled via a rotary mechanism of the central stalk subunits to proton translocation. In terms of biological role, this protein is part of the stalk that links CF(0) to CF(1). It either transmits conformational changes from CF(0) to CF(1) or is implicated in proton conduction. This chain is ATP synthase subunit delta, found in Wigglesworthia glossinidia brevipalpis.